Reading from the N-terminus, the 88-residue chain is MKKTALLAALCSVVSLSSCCRIVDCCFEDPCAPIQCSPCESKKKDVDGGCNSCNGYVPACKPCGGDTHQDAEHGPQAREIPVDGKCRQ.

Residues 1 to 18 (MKKTALLAALCSVVSLSS) form the signal peptide. A lipid anchor (N-palmitoyl cysteine) is attached at Cys19. A lipid anchor (S-diacylglycerol cysteine) is attached at Cys19. Residues 67 to 88 (THQDAEHGPQAREIPVDGKCRQ) form a disordered region.

Part of a disulfide cross-linked outer membrane complex (COMC) composed of the major outer membrane porin (MOMP), the small cysteine-rich protein (OmcA) and the large cysteine-rich periplasmic protein (OmcB).

It is found in the cell outer membrane. Its function is as follows. In elementary bodies (EBs, the infectious stage, which is able to survive outside the host cell) provides the structural integrity of the outer envelope through disulfide cross-links with the large cysteine-rich periplasmic protein and the major outer membrane porin. It has been described in publications as the Sarkosyl-insoluble COMC (Chlamydia outer membrane complex), and serves as the functional equivalent of peptidoglycan. In Chlamydia trachomatis serovar L2 (strain ATCC VR-902B / DSM 19102 / 434/Bu), this protein is Small cysteine-rich outer membrane protein OmcA (omcA).